The primary structure comprises 42 residues: F420-non-reducing hydrogenase vhu subunit U (42 aa).

Positions 21 and 24 each coordinate Ni(2+). A non-standard amino acid (selenocysteine) is located at residue selenocysteine 21. Positions 28-42 (VLDRVKFRIERKDED) are cleaved as a propeptide — removed in mature form.

Belongs to the [NiFe]/[NiFeSe] hydrogenase large subunit family. In terms of assembly, the F420-non-reducing hydrogenase vhu is composed of four subunits; VhuA, VhuD, VhuG and VhuU. It depends on Ni(2+) as a cofactor.

In Methanopyrus kandleri (strain AV19 / DSM 6324 / JCM 9639 / NBRC 100938), this protein is F420-non-reducing hydrogenase vhu subunit U (vhuU).